A 538-amino-acid chain; its full sequence is Syncytin-2 (538 aa).

The signal sequence occupies residues 1 to 15; sequence MGLLLLVLILTPSLA. Topologically, residues 16–478 are extracellular; that stretch reads AYRHPDFPLL…GWLNWEGTWK (463 aa). The CXXC motif lies at 43 to 46; it reads CWLC. Cystine bridges form between Cys-43–Cys-46, Cys-43–Cys-439, and Cys-431–Cys-438. Asn-133, Asn-146, Asn-177, Asn-220, Asn-241, Asn-247, Asn-312, and Asn-332 each carry an N-linked (GlcNAc...) asparagine glycan. The interval 354 to 374 is fusion peptide; the sequence is FIPLLAGLGILAGTGTGIAGI. Residues 414-430 carry the CKS-17 motif; sequence LQNRRGLDMLTAAQGGI. Positions 431 to 439 match the CX6CC motif; the sequence is CLALDEKCC. Asn-443 is a glycosylation site (N-linked (GlcNAc...) asparagine). A helical membrane pass occupies residues 479–499; sequence WFSWVLPLTGPLVSLLLLLLF. Residues 500 to 538 lie on the Cytoplasmic side of the membrane; that stretch reads GPCLLNLITQFVSSRLQAIKLQTNLSAGRRPRNIQESPF.

It belongs to the gamma type-C retroviral envelope protein family. HERV class-I FRD env subfamily. As to quaternary structure, the surface and transmembrane proteins form a heterodimer. They are attached by non-covalent interactions or by a labile interchain disulfide bond. Post-translationally, specific enzymatic cleavages in vivo yield the mature SU and TM proteins. In terms of processing, the CXXC motif is highly conserved across a broad range of retroviral envelope proteins. It is thought to participate in the formation of a labile disulfide bond possibly with the CX6CC motif present in the transmembrane protein.

It is found in the virion. The protein resides in the cell membrane. This endogenous retroviral envelope protein has retained its original fusogenic properties and participates in trophoblast fusion and the formation of a syncytium during placenta morphogenesis. The interaction with MFSD2A is apparently important for this process. Functionally, endogenous envelope proteins may have kept, lost or modified their original function during evolution but this one can still make pseudotypes with MLV, HIV-1 or SIV-1 virions and confer infectivity. Retroviral envelope proteins mediate receptor recognition and membrane fusion during early infection. The surface protein mediates receptor recognition, while the transmembrane protein anchors the envelope heterodimer to the viral membrane through one transmembrane domain. The other hydrophobic domain, called fusion peptide, mediates fusion of the viral membrane with the target cell membrane. This is Syncytin-2 (ERVFRD-1) from Gorilla gorilla gorilla (Western lowland gorilla).